Consider the following 267-residue polypeptide: MGKLMVPKILVTNDDGVYSTGLKAAFDSVSDLGEVTISAPAVQQSGVGRSISIFEPLRITKTDVGGIPAYAVGGTPTDSVILGVFTILKAMPDLVLSGFNIGENISTDTITTSGTIGGALEAASYGVPAIAASMQVLDEGQKFDDPRDYQRERFEAGIKVVNRIARNVLKRGMPENVDLLNINIPFHAEEDTPIEITRLARKIFKTDVEERRDPRGRPYYWIAGDLIREEEEGTDVHAIMQKGHVSITPISLDSTARIDFSEIERYL.

A divalent metal cation contacts are provided by aspartate 14, aspartate 15, serine 45, and asparagine 100.

It belongs to the SurE nucleotidase family. It depends on a divalent metal cation as a cofactor.

It is found in the cytoplasm. The catalysed reaction is a ribonucleoside 5'-phosphate + H2O = a ribonucleoside + phosphate. Its function is as follows. Nucleotidase that shows phosphatase activity on nucleoside 5'-monophosphates. The protein is 5'-nucleotidase SurE of Methanosarcina mazei (strain ATCC BAA-159 / DSM 3647 / Goe1 / Go1 / JCM 11833 / OCM 88) (Methanosarcina frisia).